A 446-amino-acid chain; its full sequence is MITIKKGLDLPIAGKPEQVIHNGNAVKEVALLGEEYVGMRPSMKVREGDVVKKGQVLFEDKKNPGIVFTAPASGTVTAINRGAKRVLQSVVIKVEGNEQITFTQYNEDELKKLTSDQVRQNLQSSGLWTALRTRPFSKVPASDAVPSSIFVNAMDTNPLSANPEIVLKEHWQDFTDGLTVLSRLHEGKLHLCKAGDSNIPTIDLPNLAVHDFSGPHPAGLSGTHIHFIDPVSVTKSVWYLNYQDVIAIGKLFTTGEIYTDRVVSLAGPQVKNPRLIRTQLGANLSHLTENELSAGENRVISGSVLSGNTAIGPYNYLGRYALQVSVIAEGREKEFLGWIMPGKNKFSITRTVLGHFSSKLFNFTSAVNGGHRAMVPIGAYERVVPLDIIPTLLLRDLASGDTDSAQALGCLELDEEDLALCTFVCPGKNEYGPMLRAALDKIEKEG.

It belongs to the NqrA family. In terms of assembly, composed of six subunits; NqrA, NqrB, NqrC, NqrD, NqrE and NqrF.

The enzyme catalyses a ubiquinone + n Na(+)(in) + NADH + H(+) = a ubiquinol + n Na(+)(out) + NAD(+). Functionally, NQR complex catalyzes the reduction of ubiquinone-1 to ubiquinol by two successive reactions, coupled with the transport of Na(+) ions from the cytoplasm to the periplasm. NqrA to NqrE are probably involved in the second step, the conversion of ubisemiquinone to ubiquinol. The protein is Na(+)-translocating NADH-quinone reductase subunit A of Histophilus somni (strain 129Pt) (Haemophilus somnus).